The primary structure comprises 1035 residues: MGGPAAPRGAGRLRALLLALVVAGIPAGAYNLDPQRPVHFQGPADSFFGYAVLEHFHDNTRWVLVGAPKADSKYSPSVKSPGAVFKCRVHTNPDRRCTELDMARGKNRGTSCGKTCREDRDDEWMGVSLARQPKADGRVLACAHRWKNIYYEADHILPHGFCYIIPSNLQAKGRTLIPCYEEYKKKYGEEHGSCQAGIAGFFTEELVVMGAPGSFYWAGTIKVLNLTDNTYLKLNDEVIMNRRYTYLGYAVTAGHFSHPSTIDVVGGAPQDKGIGKVYIFRADRRSGTLIKIFQASGKKMGSYFGSSLCAVDLNGDGLSDLLVGAPMFSEIRDEGQVTVYINRGNGALEEQLALTGDGAYNAHFGESIASLDDLDNDGFPDVAIGAPKEDDFAGAVYIYHGDAGGIVPQYSMKLSGQKINPVLRMFGQSISGGIDMDGNGYPDVTVGAFMSDSVVLLRARPVITVDVSIFLPGSINITAPQCHDGQQPVNCLNVTTCFSFHGKHVPGEIGLNYVLMADVAKKEKGQMPRVYFVLLGETMGQVTEKLQLTYMEETCRHYVAHVKRRVQDVISPIVFEAAYSLSEHVTGEEERELPPLTPVLRWKKGQKIAQKNQTVFERNCRSEDCAADLQLQGKLLLSSMDEKTLYLALGAVKNISLNISISNLGDDAYDANVSFNVSRELFFINMWQKEEMGISCELLESDFLKCSVGFPFMRSKSKYEFSVIFDTSHLSGEEEVLSFIVTAQSGNTERSESLHDNTLVLMVPLMHEVDTSITGIMSPTSFVYGESVDAANFIQLDDLECHFQPINITLQVYNTGPSTLPGSSVSISFPNRLSSGGAEMFHVQEMVVGQEKGNCSFQKNPTPCIIPQEQENIFHTIFAFFTKSGRKVLDCEKPGISCLTAHCNFSALAKEESRTIDIYMLLNTEILKKDSSSVIQFMSRAKVKVDPALRVVEIAHGNPEEVTVVFEALHNLEPRGYVVGWIIAISLLVGILIFLLLAVLLWKMGFFRRRYKEIIEAEKNRKENEDSWDWVQKNQ.

Positions 1–29 are cleaved as a signal peptide; that stretch reads MGGPAAPRGAGRLRALLLALVVAGIPAGA. Residues 30-981 are Extracellular-facing; that stretch reads YNLDPQRPVH…LEPRGYVVGW (952 aa). 7 FG-GAP repeats span residues 35–96, 111–174, 182–232, 233–289, 290–349, 351–408, and 411–474; these read QRPV…PDRR, SCGK…AKGR, EYKK…NTYL, KLND…SGTL, IKIF…GALE, QLAL…GIVP, and SMKL…LPGS. 3 disulfides stabilise this stretch: cysteine 87/cysteine 97, cysteine 142/cysteine 162, and cysteine 179/cysteine 194. Asparagine 225 carries N-linked (GlcNAc...) asparagine glycosylation. Aspartate 312, asparagine 314, aspartate 316, aspartate 320, aspartate 373, aspartate 375, aspartate 377, aspartate 381, aspartate 435, aspartate 437, asparagine 439, and aspartate 443 together coordinate Ca(2+). N-linked (GlcNAc...) asparagine glycosylation is present at asparagine 476. Cysteine 482 and cysteine 491 are disulfide-bonded. Asparagine 493 is a glycosylation site (N-linked (GlcNAc...) asparagine). Cysteine 497 and cysteine 555 are disulfide-bonded. N-linked (GlcNAc...) asparagine glycosylation occurs at asparagine 612. The cysteines at positions 620 and 625 are disulfide-linked. Asparagine 654, asparagine 658, asparagine 672, and asparagine 676 each carry an N-linked (GlcNAc...) asparagine glycan. A disulfide bridge links cysteine 696 with cysteine 706. N-linked (GlcNAc...) asparagine glycosylation is found at asparagine 807 and asparagine 854. 2 disulfides stabilise this stretch: cysteine 855–cysteine 891 and cysteine 898–cysteine 903. A glycan (N-linked (GlcNAc...) asparagine) is linked at asparagine 904. The chain crosses the membrane as a helical span at residues 982–1002; the sequence is IIAISLLVGILIFLLLAVLLW. Residues 1003–1035 are Cytoplasmic-facing; that stretch reads KMGFFRRRYKEIIEAEKNRKENEDSWDWVQKNQ. Positions 1005–1009 match the GFFKR motif motif; the sequence is GFFRR.

Belongs to the integrin alpha chain family. Heterodimer of an alpha and a beta subunit. Alpha-9 (ITGA9) associates with beta-1 (ITGB1). Integrin ITGA9:ITGB1 interacts with FBLN5 (via N-terminus). Integrin ITGA9:ITGB1 interacts with SPP1/OPN (via N-terminus). Integrin ITGA9:ITGB1 interacts with TNC/TNFN3 (via the 3rd Fibronectin type-III domain). Integrin ITGA9:ITGB1 interacts with SVEP1/polydom (via Sushi domain 21); thereby inhibits Ca(2+) intracellular signaling and as a result represses vasocontraction. Expressed in vascular smooth muscle cells (at protein level). Expressed in the airway epithelium (at protein level).

The protein resides in the membrane. Integrin alpha-9/beta-1 (ITGA9:ITGB1) is a receptor for VCAM1, cytotactin and osteopontin. It recognizes the sequence A-E-I-D-G-I-E-L in cytotactin. ITGA9:ITGB1 may play a crucial role in SVEP1/polydom-mediated myoblast cell adhesion. Integrin ITGA9:ITGB1 represses PRKCA-mediated L-type voltage-gated channel Ca(2+) influx and ROCK-mediated calcium sensitivity in vascular smooth muscle cells via its interaction with SVEP1, thereby inhibiting vasocontraction. This chain is Integrin alpha-9 (ITGA9), found in Homo sapiens (Human).